A 217-amino-acid polypeptide reads, in one-letter code: 3-isopropylmalate dehydratase small subunit (217 aa).

This sequence belongs to the LeuD family. LeuD type 1 subfamily. Heterodimer of LeuC and LeuD.

The catalysed reaction is (2R,3S)-3-isopropylmalate = (2S)-2-isopropylmalate. It participates in amino-acid biosynthesis; L-leucine biosynthesis; L-leucine from 3-methyl-2-oxobutanoate: step 2/4. Its function is as follows. Catalyzes the isomerization between 2-isopropylmalate and 3-isopropylmalate, via the formation of 2-isopropylmaleate. The protein is 3-isopropylmalate dehydratase small subunit of Paraburkholderia phymatum (strain DSM 17167 / CIP 108236 / LMG 21445 / STM815) (Burkholderia phymatum).